Reading from the N-terminus, the 665-residue chain is Anaphase-promoting complex subunit 3 (665 aa).

Residues 115-148 (SCMLDVLGTMYKKAGFLKKATDCFVEAVSINPYN) form a TPR 1 repeat. The DNA-binding element occupies 191–257 (VPEPSFLKKS…HQSLKLQSQS (67 aa)). 8 TPR repeats span residues 329 to 362 (LLKL…QQNT), 363 to 396 (PFVL…SPSR), 431 to 464 (PESW…DPTF), 466 to 498 (YAYT…NVRH), 499 to 532 (YNAW…NPNN), 534 to 566 (VLIT…DEKS), 568 to 600 (LARF…APDE), and 601 to 634 (ANVH…DGKA).

The protein belongs to the APC3/CDC27 family. The APC/C is composed of at least 13 subunits: apc1, apc2, nuc2, apc4, apc5, cut9, apc8, apc10, apc11, hcn1, apc13, apc14 and apc15. Interacts with apc10 and cut9.

It is found in the nucleus. Component of the anaphase-promoting complex/cyclosome (APC/C), a cell cycle-regulated E3 ubiquitin-protein ligase complex that controls progression through mitosis and the G1 phase of the cell cycle. The APC/C is thought to confer substrate specificity and, in the presence of ubiquitin-conjugating E2 enzymes, it catalyzes the formation of protein-ubiquitin conjugates that are subsequently degraded by the 26S proteasome. Interacts with spindle apparatus, chromosomes, or nuclear envelope, and interconnect nuclear and cytoskeletal functions in mitosis, so the elongation of the spindle in anaphase is blocked. In Schizosaccharomyces pombe (strain 972 / ATCC 24843) (Fission yeast), this protein is Anaphase-promoting complex subunit 3 (nuc2).